The following is a 169-amino-acid chain: Lutropin/choriogonadotropin subunit beta (169 aa).

Residues 1–20 (MEMLQGLLLWMLLSVGGVWA) form the signal peptide. 6 cysteine pairs are disulfide-bonded: Cys29/Cys77, Cys43/Cys92, Cys46/Cys130, Cys54/Cys108, Cys58/Cys110, and Cys113/Cys120. Asn33 carries N-linked (GlcNAc...) asparagine glycosylation. A disordered region spans residues 131 to 169 (APQASSSSKDPPSQPLTSTSTPTPGASNRSSHPLPIKTS). Residues 145–154 (PLTSTSTPTP) are compositionally biased toward low complexity. Over residues 155 to 169 (GASNRSSHPLPIKTS) the composition is skewed to polar residues. The N-linked (GlcNAc...) asparagine glycan is linked to Asn158.

Belongs to the glycoprotein hormones subunit beta family. Heterodimer of a common alpha chain and a unique beta chain which confers biological specificity to thyrotropin, lutropin, follitropin and gonadotropin.

The protein resides in the secreted. Promotes spermatogenesis and ovulation by stimulating the testes and ovaries to synthesize steroids. The polypeptide is Lutropin/choriogonadotropin subunit beta (LHB) (Equus quagga burchellii (Burchell's zebra)).